Consider the following 307-residue polypeptide: Elongation factor Ts (307 aa).

The interval 80-83 (TDFV) is involved in Mg(2+) ion dislocation from EF-Tu.

It belongs to the EF-Ts family.

It localises to the cytoplasm. In terms of biological role, associates with the EF-Tu.GDP complex and induces the exchange of GDP to GTP. It remains bound to the aminoacyl-tRNA.EF-Tu.GTP complex up to the GTP hydrolysis stage on the ribosome. The sequence is that of Elongation factor Ts (tsf) from Zymomonas mobilis subsp. mobilis (strain ATCC 31821 / ZM4 / CP4).